Reading from the N-terminus, the 198-residue chain is MAEVRARVDFKVGAKSNIDAEILSFHGLQSDKEHVAVIFKSADTTQEAPLVRMHSECLTGDVFHSSRCDCGEQLEETITRMGQSGGIILYLRQEGRGIGLYNKIDAYRLQSQGMNTYEANNHLGFGDDLRDFTEAAQMLQALGVKKIRLVTNNPKKIRELQEHGIEIVEVVHTSAHIKDGNENYLKAKVSHGKHQLKL.

Arginine 52–glutamate 56 provides a ligand contact to GTP. The Zn(2+) site is built by cysteine 57, cysteine 68, and cysteine 70. Residues glutamine 73, glutamate 94 to arginine 96, and threonine 116 contribute to the GTP site. The Proton acceptor role is filled by aspartate 128. Arginine 130 serves as the catalytic Nucleophile. The GTP site is built by threonine 151 and lysine 156.

The protein belongs to the GTP cyclohydrolase II family. The cofactor is Zn(2+).

The catalysed reaction is GTP + 4 H2O = 2,5-diamino-6-hydroxy-4-(5-phosphoribosylamino)-pyrimidine + formate + 2 phosphate + 3 H(+). The protein operates within cofactor biosynthesis; riboflavin biosynthesis; 5-amino-6-(D-ribitylamino)uracil from GTP: step 1/4. In terms of biological role, catalyzes the conversion of GTP to 2,5-diamino-6-ribosylamino-4(3H)-pyrimidinone 5'-phosphate (DARP), formate and pyrophosphate. The chain is GTP cyclohydrolase-2 from Vibrio cholerae serotype O1 (strain ATCC 39315 / El Tor Inaba N16961).